The chain runs to 231 residues: Large ribosomal subunit protein uL1 (231 aa).

The protein belongs to the universal ribosomal protein uL1 family. Part of the 50S ribosomal subunit.

Its function is as follows. Binds directly to 23S rRNA. The L1 stalk is quite mobile in the ribosome, and is involved in E site tRNA release. In terms of biological role, protein L1 is also a translational repressor protein, it controls the translation of the L11 operon by binding to its mRNA. In Shouchella clausii (strain KSM-K16) (Alkalihalobacillus clausii), this protein is Large ribosomal subunit protein uL1.